A 706-amino-acid chain; its full sequence is Glycylpeptide N-tetradecanoyltransferase (706 aa).

The segment at 1–119 is disordered; that stretch reads MSGIAGTSQD…LASGSSREGK (119 aa). Positions 7–42 are enriched in low complexity; that stretch reads TSQDTSVAASASSSSTRPAAASSSIAPPSPSLTTAP. Over residues 47 to 65 the composition is skewed to acidic residues; it reads EQDDDDDQENDDEEEEEEG. Basic residues predominate over residues 78–95; it reads KQRKKKKSKAAAKLRKKL. Tetradecanoyl-CoA contacts are provided by residues 180–183, 317–319, and 325–329; these read HKFW, LCV, and SKRLA. Valine 706 acts as the Proton acceptor; via carboxylate in catalysis.

It belongs to the NMT family. As to quaternary structure, monomer.

It localises to the cytoplasm. The catalysed reaction is N-terminal glycyl-[protein] + tetradecanoyl-CoA = N-tetradecanoylglycyl-[protein] + CoA + H(+). Functionally, adds a myristoyl group to the N-terminal glycine residue of certain cellular proteins. This Mycosarcoma maydis (Corn smut fungus) protein is Glycylpeptide N-tetradecanoyltransferase (NMT1).